A 458-amino-acid polypeptide reads, in one-letter code: 3-isopropylmalate dehydratase large subunit (458 aa).

[4Fe-4S] cluster contacts are provided by Cys-337, Cys-397, and Cys-400.

It belongs to the aconitase/IPM isomerase family. LeuC type 1 subfamily. In terms of assembly, heterodimer of LeuC and LeuD. The cofactor is [4Fe-4S] cluster.

The catalysed reaction is (2R,3S)-3-isopropylmalate = (2S)-2-isopropylmalate. The protein operates within amino-acid biosynthesis; L-leucine biosynthesis; L-leucine from 3-methyl-2-oxobutanoate: step 2/4. Functionally, catalyzes the isomerization between 2-isopropylmalate and 3-isopropylmalate, via the formation of 2-isopropylmaleate. The sequence is that of 3-isopropylmalate dehydratase large subunit from Leuconostoc mesenteroides subsp. mesenteroides (strain ATCC 8293 / DSM 20343 / BCRC 11652 / CCM 1803 / JCM 6124 / NCDO 523 / NBRC 100496 / NCIMB 8023 / NCTC 12954 / NRRL B-1118 / 37Y).